The sequence spans 631 residues: DNA mismatch repair protein MutL (631 aa).

The protein belongs to the DNA mismatch repair MutL/HexB family.

Functionally, this protein is involved in the repair of mismatches in DNA. It is required for dam-dependent methyl-directed DNA mismatch repair. May act as a 'molecular matchmaker', a protein that promotes the formation of a stable complex between two or more DNA-binding proteins in an ATP-dependent manner without itself being part of a final effector complex. The chain is DNA mismatch repair protein MutL from Mannheimia succiniciproducens (strain KCTC 0769BP / MBEL55E).